A 192-amino-acid polypeptide reads, in one-letter code: Superoxide dismutase [Fe] (192 aa).

Fe cation contacts are provided by H27, H74, D157, and H161.

Belongs to the iron/manganese superoxide dismutase family. In terms of assembly, homodimer. Fe cation is required as a cofactor.

It carries out the reaction 2 superoxide + 2 H(+) = H2O2 + O2. Functionally, destroys superoxide anion radicals which are normally produced within the cells and which are toxic to biological systems. In Legionella pneumophila subsp. pneumophila (strain Philadelphia 1 / ATCC 33152 / DSM 7513), this protein is Superoxide dismutase [Fe] (sodB).